Consider the following 378-residue polypeptide: Succinyl-diaminopimelate desuccinylase (378 aa).

H68 contributes to the Zn(2+) binding site. D70 is a catalytic residue. A Zn(2+)-binding site is contributed by D101. The Proton acceptor role is filled by E135. Residues E136, E164, and H350 each contribute to the Zn(2+) site.

It belongs to the peptidase M20A family. DapE subfamily. As to quaternary structure, homodimer. Requires Zn(2+) as cofactor. Co(2+) is required as a cofactor.

It carries out the reaction N-succinyl-(2S,6S)-2,6-diaminopimelate + H2O = (2S,6S)-2,6-diaminopimelate + succinate. Its pathway is amino-acid biosynthesis; L-lysine biosynthesis via DAP pathway; LL-2,6-diaminopimelate from (S)-tetrahydrodipicolinate (succinylase route): step 3/3. Its function is as follows. Catalyzes the hydrolysis of N-succinyl-L,L-diaminopimelic acid (SDAP), forming succinate and LL-2,6-diaminopimelate (DAP), an intermediate involved in the bacterial biosynthesis of lysine and meso-diaminopimelic acid, an essential component of bacterial cell walls. This is Succinyl-diaminopimelate desuccinylase from Acinetobacter baumannii (strain ATCC 17978 / DSM 105126 / CIP 53.77 / LMG 1025 / NCDC KC755 / 5377).